The following is a 75-amino-acid chain: Putative DNA-directed RNA polymerase subunit omega (75 aa).

This sequence belongs to the RNA polymerase subunit omega family.

It localises to the plastid. Its subcellular location is the chloroplast. It catalyses the reaction RNA(n) + a ribonucleoside 5'-triphosphate = RNA(n+1) + diphosphate. Functionally, may be involved in RNA polymerase activity. This chain is Putative DNA-directed RNA polymerase subunit omega (rpoZ), found in Porphyra purpurea (Red seaweed).